The primary structure comprises 142 residues: Nucleoside diphosphate kinase (142 aa).

Residues Lys-11, Phe-59, Arg-87, Thr-93, Arg-104, and Asn-114 each coordinate ATP. The active-site Pros-phosphohistidine intermediate is the His-117.

This sequence belongs to the NDK family. As to quaternary structure, homotetramer. Mg(2+) is required as a cofactor.

Its subcellular location is the cytoplasm. The catalysed reaction is dZDP + ATP = dZTP + ADP. It catalyses the reaction a 2'-deoxyribonucleoside 5'-diphosphate + ATP = a 2'-deoxyribonucleoside 5'-triphosphate + ADP. It carries out the reaction a ribonucleoside 5'-diphosphate + ATP = a ribonucleoside 5'-triphosphate + ADP. It participates in purine metabolism. In terms of biological role, major role in the synthesis of nucleoside triphosphates other than ATP. The ATP gamma phosphate is transferred to the NDP beta phosphate via a ping-pong mechanism, using a phosphorylated active-site intermediate. Its function is as follows. (Microbial infection) Catalyzes the phosphorylation of dZDP to dZTP, when the bacterium is infected by a phage that produces the substrate for the synthesis of dZTP (2- amino-2'-deoxyadenosine 5'-triphosphate), which is then used by the phage as a DNA polymerase substrate. The polypeptide is Nucleoside diphosphate kinase (Vibrio cholerae serotype O1 (strain ATCC 39315 / El Tor Inaba N16961)).